Here is a 417-residue protein sequence, read N- to C-terminus: Serine hydroxymethyltransferase (417 aa).

(6S)-5,6,7,8-tetrahydrofolate contacts are provided by residues leucine 121 and 125–127; that span reads GHL. Lysine 229 bears the N6-(pyridoxal phosphate)lysine mark. Position 355-357 (355-357) interacts with (6S)-5,6,7,8-tetrahydrofolate; the sequence is SPF.

This sequence belongs to the SHMT family. Homodimer. Pyridoxal 5'-phosphate is required as a cofactor.

Its subcellular location is the cytoplasm. The catalysed reaction is (6R)-5,10-methylene-5,6,7,8-tetrahydrofolate + glycine + H2O = (6S)-5,6,7,8-tetrahydrofolate + L-serine. The protein operates within one-carbon metabolism; tetrahydrofolate interconversion. It functions in the pathway amino-acid biosynthesis; glycine biosynthesis; glycine from L-serine: step 1/1. Catalyzes the reversible interconversion of serine and glycine with tetrahydrofolate (THF) serving as the one-carbon carrier. This reaction serves as the major source of one-carbon groups required for the biosynthesis of purines, thymidylate, methionine, and other important biomolecules. Also exhibits THF-independent aldolase activity toward beta-hydroxyamino acids, producing glycine and aldehydes, via a retro-aldol mechanism. This Shewanella putrefaciens (strain CN-32 / ATCC BAA-453) protein is Serine hydroxymethyltransferase.